The following is a 311-amino-acid chain: Heme A synthase (311 aa).

The Cytoplasmic segment spans residues 1–6; it reads MQRFIK. Residues 7-27 form a helical membrane-spanning segment; sequence WLAVITSLDLLIVLLGGALVT. Residues 28-62 are Extracellular-facing; that stretch reads KTGSGQGCGKSWPLCNGEFVPSNLSMETIIELSHR. A disulfide bridge links Cys35 with Cys42. Glu58 is an active-site residue. His61 contributes to the heme o binding site. A helical transmembrane segment spans residues 63 to 83; that stretch reads LTSGSAGILVTLLCILSWKYY. At 84–91 the chain is on the cytoplasmic side; sequence KHVRETKT. The helical transmembrane segment at 92 to 112 threads the bilayer; it reads LAILSFVFLVAQALMGAAAVV. Topologically, residues 113-121 are extracellular; sequence WGQMPAVLA. The helical transmembrane segment at 122-142 threads the bilayer; it reads IHFGISLISFASVILLTCLIF. Heme o is bound at residue His123. Residues 143-159 lie on the Cytoplasmic side of the membrane; that stretch reads EIDQKFDARSLIMDKKM. A helical transmembrane segment spans residues 160–180; the sequence is KFHIYGVTIYCYLVVYTGALV. At 181–211 the chain is on the extracellular side; sequence RHERASLACPDFPLCSKNRPMPTQLHEWVQM. An intrachain disulfide couples Cys189 to Cys195. A helical membrane pass occupies residues 212 to 232; the sequence is GHRLAAMLIFVWILYAMILAI. His213 is a heme b binding site. The Cytoplasmic portion of the chain corresponds to 233–243; the sequence is RHYKQQPVVYW. A helical membrane pass occupies residues 244–264; it reads GWIISFILVTLQAIVGILVVF. Over 265–271 the chain is Extracellular; that stretch reads TNASLAM. Residues 272 to 292 form a helical membrane-spanning segment; it reads ALLHSLFISCLFAVLCYLVML. His275 is a heme b binding site. The Cytoplasmic segment spans residues 293–311; sequence GTRSKVNAKEAASTSKQTK.

It belongs to the COX15/CtaA family. Type 1 subfamily. As to quaternary structure, interacts with CtaB. It depends on heme b as a cofactor.

It is found in the cell membrane. The catalysed reaction is Fe(II)-heme o + 2 A + H2O = Fe(II)-heme a + 2 AH2. It participates in porphyrin-containing compound metabolism; heme A biosynthesis; heme A from heme O: step 1/1. Functionally, catalyzes the conversion of heme O to heme A by two successive hydroxylations of the methyl group at C8. The first hydroxylation forms heme I, the second hydroxylation results in an unstable dihydroxymethyl group, which spontaneously dehydrates, resulting in the formyl group of heme A. This chain is Heme A synthase, found in Bacillus cereus (strain 03BB102).